The primary structure comprises 211 residues: Protein-L-isoaspartate O-methyltransferase (211 aa).

S60 is an active-site residue.

This sequence belongs to the methyltransferase superfamily. L-isoaspartyl/D-aspartyl protein methyltransferase family.

It localises to the cytoplasm. The enzyme catalyses [protein]-L-isoaspartate + S-adenosyl-L-methionine = [protein]-L-isoaspartate alpha-methyl ester + S-adenosyl-L-homocysteine. Functionally, catalyzes the methyl esterification of L-isoaspartyl residues in peptides and proteins that result from spontaneous decomposition of normal L-aspartyl and L-asparaginyl residues. It plays a role in the repair and/or degradation of damaged proteins. This chain is Protein-L-isoaspartate O-methyltransferase, found in Ectopseudomonas mendocina (strain ymp) (Pseudomonas mendocina).